The following is a 787-amino-acid chain: MANILKRWVESDKRTIRRLDKIANKVEAYADEYGKLSDADLQAKTPEFRERYKEGESLDDLLPEAFATAREGAKRVLGLYPFHVQILGGIVLHQGDIAEMKTGEGKTLTATMPVYLNAISGKGVHVVTVNEYLSARDATEMGELYNWLGMSVGINGAEKSPEEKRAAYNADITYSTNGEIGFDYLRDNMVVYREDMVQRPLNFAIIDEVDSILIDEARTPLIISGQSEGTTGMYKRADRFAKTLTKDEDYKVDLESKTVALLDEGIRKAEKYFGLENLYDTDNTALNHYLDEALRANYIMLKDKDYVISDGQALIVDSFTGRIMDGRRFSDGLHQAIEAKEHVEIQEETKTMANITYQNLFRMYKKLSGMTGTAKTEQEEFREIYNMEVITIPTNRPMIRDDRSDLLYPTLQSKFNAVVKEIKQLHEKGQPMLIGTVAVETSEYLSHRLDEENIPHVVLNAKNHAKEADIVANAGQRGAVTIATNMAGRGTDIKLGPGVKEVGGLAVIGTERHESRRIDNQLRGRAGRQGDPGMSQFYLSLEDDLMLRFGSERIKNFLQRMNVEDDDAVIQSRMITRQVESAQKRVEGNNYDSRKNVLQYDDVMRAQREVIYGERQQVIMEEKSLKPVIMPMIKRTVERTVQLHMQGDAKDWDLDAVVDFAQAAMVKEDSISVADLKGKSPAEVEAYLMDRVDKIYADKAKQLYDAGQMLEFEKVVILRVVDSHWTDHIDAMDQLRQSIGLRGYGQLNPLVEYQRDGYQMFEEMVADIDYDTTRLFMKSEIRQNIQR.

Residues Q85, 103–107 (GEGKT), and D492 each bind ATP.

This sequence belongs to the SecA family. As to quaternary structure, monomer and homodimer. Part of the essential Sec protein translocation apparatus which comprises SecA, SecYEG and auxiliary proteins SecDF. Other proteins may also be involved.

The protein localises to the cell membrane. It localises to the cytoplasm. The enzyme catalyses ATP + H2O + cellular proteinSide 1 = ADP + phosphate + cellular proteinSide 2.. Functionally, part of the Sec protein translocase complex. Interacts with the SecYEG preprotein conducting channel. Has a central role in coupling the hydrolysis of ATP to the transfer of proteins into and across the cell membrane, serving as an ATP-driven molecular motor driving the stepwise translocation of polypeptide chains across the membrane. The sequence is that of Protein translocase subunit SecA from Lactiplantibacillus plantarum (strain ATCC BAA-793 / NCIMB 8826 / WCFS1) (Lactobacillus plantarum).